We begin with the raw amino-acid sequence, 339 residues long: Glycerol-3-phosphate dehydrogenase [NAD(P)+] (339 aa).

Positions 13, 14, and 108 each coordinate NADPH. Lys-108, Gly-139, and Ser-141 together coordinate sn-glycerol 3-phosphate. NADPH is bound at residue Ala-143. Sn-glycerol 3-phosphate is bound by residues Lys-194, Asp-247, Ser-257, Arg-258, and Asn-259. Lys-194 functions as the Proton acceptor in the catalytic mechanism. Arg-258 lines the NADPH pocket. NADPH contacts are provided by Val-282 and Glu-284.

The protein belongs to the NAD-dependent glycerol-3-phosphate dehydrogenase family.

The protein resides in the cytoplasm. The enzyme catalyses sn-glycerol 3-phosphate + NAD(+) = dihydroxyacetone phosphate + NADH + H(+). It carries out the reaction sn-glycerol 3-phosphate + NADP(+) = dihydroxyacetone phosphate + NADPH + H(+). Its pathway is membrane lipid metabolism; glycerophospholipid metabolism. Its function is as follows. Catalyzes the reduction of the glycolytic intermediate dihydroxyacetone phosphate (DHAP) to sn-glycerol 3-phosphate (G3P), the key precursor for phospholipid synthesis. This chain is Glycerol-3-phosphate dehydrogenase [NAD(P)+], found in Streptococcus equi subsp. zooepidemicus (strain H70).